The primary structure comprises 1377 residues: DNA-directed RNA polymerase subunit beta'' (1377 aa).

Residues C220, C291, C298, and C301 each coordinate Zn(2+).

It belongs to the RNA polymerase beta' chain family. RpoC2 subfamily. In terms of assembly, in plastids the minimal PEP RNA polymerase catalytic core is composed of four subunits: alpha, beta, beta', and beta''. When a (nuclear-encoded) sigma factor is associated with the core the holoenzyme is formed, which can initiate transcription. Zn(2+) serves as cofactor.

The protein resides in the plastid. The protein localises to the chloroplast. The catalysed reaction is RNA(n) + a ribonucleoside 5'-triphosphate = RNA(n+1) + diphosphate. DNA-dependent RNA polymerase catalyzes the transcription of DNA into RNA using the four ribonucleoside triphosphates as substrates. This chain is DNA-directed RNA polymerase subunit beta'', found in Nandina domestica (Heavenly bamboo).